Reading from the N-terminus, the 248-residue chain is Segregation and condensation protein A (248 aa).

It belongs to the ScpA family. As to quaternary structure, component of a cohesin-like complex composed of ScpA, ScpB and the Smc homodimer, in which ScpA and ScpB bind to the head domain of Smc. The presence of the three proteins is required for the association of the complex with DNA.

Its subcellular location is the cytoplasm. Functionally, participates in chromosomal partition during cell division. May act via the formation of a condensin-like complex containing Smc and ScpB that pull DNA away from mid-cell into both cell halves. This Bacillus cytotoxicus (strain DSM 22905 / CIP 110041 / 391-98 / NVH 391-98) protein is Segregation and condensation protein A.